The primary structure comprises 1462 residues: DNA polymerase III PolC-type (1462 aa).

The Exonuclease domain occupies 424–580 (YVVFDVETTG…YDAEATGRLL (157 aa)).

It belongs to the DNA polymerase type-C family. PolC subfamily.

Its subcellular location is the cytoplasm. The catalysed reaction is DNA(n) + a 2'-deoxyribonucleoside 5'-triphosphate = DNA(n+1) + diphosphate. Required for replicative DNA synthesis. This DNA polymerase also exhibits 3' to 5' exonuclease activity. The sequence is that of DNA polymerase III PolC-type from Streptococcus sanguinis (strain SK36).